We begin with the raw amino-acid sequence, 725 residues long: MLEMYINNNNTEFQKQQLWTAIVQAKQDGLSNEEIIENVQEALPDAMVFYAETVLKQIDFRAKLSRPVVEFNLEFLFQVIYESVIAGTNDNEILSICAEHCTLNQYEFVRYALEYIHLHRMPSQWEQNNVYQKMIEIVSSSPIESLFEYIESIKNIYLKQIGYELVQENLYNLLLNNKPISYFTDLANQSKDKFIKNYCCRTAVLVARATGKPLDLKVTGDGSIILKETKYLNSEIANNGIVSSNILTMGQAGKLLVDTLEDFNINAKYVDAKNGPTFNRIRVKLERGVSYKKVEDIGNDLVQQLGEELGLKVAPMVSVVPGGVVFDIPRLDRQFAYFRDYFSFDGEPDIYSVSIPGGVDVDGTYVEIPLYSDNVTHILGGGRTRGGKSQFEKAAILYLVRRYPPSVVRLALSDVKRVTFGKFDGLPHLVAPVARDAESTANLLDYLVEEMELRYQEFERHSSIETIAQYNSRFAPDCIMPRVICLIDECFDLLSDDNYCDRIETALMKLLAKAGGAGIHVLLYTQRPDKNVIDPLIRSNFPAKTAFVTTRPEDSCIILGDDKDKRAVYLLGYGDFLYKTTEVLRLQALYVADDEDPEYFQQLLLEAKNQNDPYTAWKSGLDFDEFVASLYDESSSNDNGKFKATTATKTKQSKTDFEGSFSFKVQLDEEARNSIMNLHQKGYQLDEIVKAVFNLSRQDGRSYKKFRNVVEEFLNNFKGGGEDDI.

Residues 363–556 enclose the FtsK domain; sequence GTYVEIPLYS…FVTTRPEDSC (194 aa). An ATP-binding site is contributed by 382-389; it reads GRTRGGKS.

The protein belongs to the FtsK/SpoIIIE/SftA family.

Functionally, probable DNA motor protein. May track DNA in a ATP-dependent manner by generating positive supercoils in front of it and negative supercoils behind it. This is an uncharacterized protein from Nostoc sp. (strain PCC 7120 / SAG 25.82 / UTEX 2576).